The following is a 336-amino-acid chain: Methionine import ATP-binding protein MetN (336 aa).

An ABC transporter domain is found at 2–254 (IKIKNLKKYY…PNAKMKEFLG (253 aa)). 34-41 (GHSGAGKS) is an ATP binding site.

This sequence belongs to the ABC transporter superfamily. Methionine importer (TC 3.A.1.24) family. The complex is composed of two ATP-binding proteins (MetN), two transmembrane proteins (MetI) and a solute-binding protein (MetQ).

It is found in the cell inner membrane. It catalyses the reaction L-methionine(out) + ATP + H2O = L-methionine(in) + ADP + phosphate + H(+). It carries out the reaction D-methionine(out) + ATP + H2O = D-methionine(in) + ADP + phosphate + H(+). Part of the ABC transporter complex MetNIQ involved in methionine import. Responsible for energy coupling to the transport system. The polypeptide is Methionine import ATP-binding protein MetN (Campylobacter jejuni subsp. jejuni serotype O:2 (strain ATCC 700819 / NCTC 11168)).